A 217-amino-acid polypeptide reads, in one-letter code: Small ribosomal subunit protein uS3 (217 aa).

One can recognise a KH type-2 domain in the interval 38–106 (IRKYIDNALQ…KVHINVIEIK (69 aa)).

It belongs to the universal ribosomal protein uS3 family. As to quaternary structure, part of the 30S ribosomal subunit. Forms a tight complex with proteins S10 and S14.

Its function is as follows. Binds the lower part of the 30S subunit head. Binds mRNA in the 70S ribosome, positioning it for translation. The protein is Small ribosomal subunit protein uS3 of Staphylococcus saprophyticus subsp. saprophyticus (strain ATCC 15305 / DSM 20229 / NCIMB 8711 / NCTC 7292 / S-41).